We begin with the raw amino-acid sequence, 1027 residues long: MGNRVSTYSPQFITINGNNNALDTKTMERFDQTNSVDAAVKLPDGINPTRAEFSTVNDMRAFLGLRDDLLCEDDDIFEDMFDQMVGSEGKIKGVVSGTLDGYEKIRKAANWLGGTYSRPWRVETREMSEIQKRIDTALPAMTSIIGGTFGPGAARVGGDHMLVRPEQWVNVRGDFFLGHDDGFESRHIAVGTDAFQCVRLGRLMPEFGDAVRGGGWANGVSYLMGQPLFQIAYGRVVNDVDRPIQILWQAALRTAASSEGDVPVAEALKILGAMTKSTFSWMVSIVGTEYSMEATAERPMFPMTHLTSADYELLHRLFVMWLKGDVMHSRFFDVVANLESFTSGMCFLNRVRLALQLFVTKLDEETKSRQDYWCDMLNQLMEVHSCPLLYTAFLLSGGWNDEVSMKVEPIDGVVLERLEFSGRYLWMSWRNAATYSEYVRMHAEGGDGDDDILGLLKRGAAQMKGMVAGHLRPVLNEAAGAAERVMTGWAKQKAGTLKQAVTNAMAGVLLDTKREAQAEANVYGSMVGGRHVLALPPTDHLQKLAPLVPPGAADTVIDDVKRVGHHVGLAIMERGEPVREPVVENHVVHEMVNRTKTGVGQIGEVRRELAKCSEVMKDVSVEKMVARPDEVRGTSFPIHTRGYHVSLVDGCDKHAMKDPTNNLAAGATFSCQGLVTGKLKTCFSVTLAKAHHNRETSPTTLHVISGGFFSYDPAAVHIGGQDGGGPDHDMNINVVVTAAVKKSTSETACKVYVGAIAKSPNTTHHTTNNGVGFVPAIDDKGQTYFTTSGVFVGRLSFNISALLRGGLTGVTSCPWDGTFAFVVACGCSNYGSSGCTHVELVQLGVEFGECIIVPRGLDRYYIFNRVRYYDKTIFDFIGRVDATVAVSESPLDVVSAWSELISPLVVYLPLMVHELKSANTLALVKTRYRAWLKKVGLKMGENNPFRTDEDCDGWVCAAILAMPMWMRYAGGNPLIIMTQDDRKASAIMLLSTAKAMLPLSAFQLVDGSLSRAAAKGLKWAADREIMG.

This is an uncharacterized protein from Colorado tick fever virus (strain USA/Florio N-7180) (CTFV).